The following is a 653-amino-acid chain: Rab11 family-interacting protein 5 (653 aa).

One can recognise a C2 domain in the interval 5-146 (RGAEPAAGPS…AGRAQHTQWY (142 aa)). Phosphoserine is present on residues Ser-176, Ser-283, Ser-286, Ser-307, Ser-357, and Ser-367. The interval 269–300 (GPGAELLTRSPSRSSWLSTEGGRDSAQSPKLF) is disordered. The segment covering 277-286 (RSPSRSSWLS) has biased composition (polar residues). 2 disordered regions span residues 342 to 402 (HIYN…AVLG) and 415 to 548 (PGAS…RSSL). Positions 357 to 368 (SISGSLPSSGSL) are enriched in low complexity. The span at 375–387 (FSEEGPRSTDDTW) shows a compositional bias: basic and acidic residues. Residues Ser-391 and Ser-395 each carry the phosphoserine modification. Basic and acidic residues-rich tracts occupy residues 420 to 430 (PGEEEGARLPE) and 447 to 460 (VAEK…ERKP). Phosphoserine is present on residues Ser-494, Ser-538, Ser-547, and Ser-553. Positions 586-648 (KDSAVLDQSA…ETSPTLLQIP (63 aa)) constitute an FIP-RBD domain.

Interacts with RAB11FIP4. Interacts with NAPG. Interacts with RO60. Interacts with RAB11A that has been activated by GTP binding. In terms of assembly, (Microbial infection) Interacts with Kaposi's sarcoma-associated herpesvirus/HHV-8 protein ORF45; this interaction results in the lysosomal degradation of ORF45 and the inhibition of viral particle release. Phosphorylated on serine and threonine residues. Phosphorylation at Ser-357 is PKA-dependent. Detected at low levels in heart, brain, placenta, lung, liver, adipocytes, kidney, spleen, skeletal muscle and pancreas.

Its subcellular location is the cytoplasm. The protein resides in the recycling endosome membrane. The protein localises to the early endosome membrane. It is found in the golgi apparatus membrane. It localises to the cytoplasmic vesicle. Its subcellular location is the secretory vesicle membrane. The protein resides in the mitochondrion membrane. Its function is as follows. Rab effector involved in protein trafficking from apical recycling endosomes to the apical plasma membrane. Involved in insulin granule exocytosis. May regulate V-ATPase intracellular transport in response to extracellular acidosis. The sequence is that of Rab11 family-interacting protein 5 from Homo sapiens (Human).